Here is a 411-residue protein sequence, read N- to C-terminus: Phosphopentomutase (411 aa).

Residues Asp14, Asp306, His311, Asp347, His348, and His359 each coordinate Mn(2+).

Belongs to the phosphopentomutase family. Mn(2+) is required as a cofactor.

It localises to the cytoplasm. It catalyses the reaction 2-deoxy-alpha-D-ribose 1-phosphate = 2-deoxy-D-ribose 5-phosphate. It carries out the reaction alpha-D-ribose 1-phosphate = D-ribose 5-phosphate. The protein operates within carbohydrate degradation; 2-deoxy-D-ribose 1-phosphate degradation; D-glyceraldehyde 3-phosphate and acetaldehyde from 2-deoxy-alpha-D-ribose 1-phosphate: step 1/2. Isomerase that catalyzes the conversion of deoxy-ribose 1-phosphate (dRib-1-P) and ribose 1-phosphate (Rib-1-P) to deoxy-ribose 5-phosphate (dRib-5-P) and ribose 5-phosphate (Rib-5-P), respectively. The chain is Phosphopentomutase from Lactococcus lactis subsp. lactis (strain IL1403) (Streptococcus lactis).